Reading from the N-terminus, the 486-residue chain is Membrane-bound lytic murein transglycosylase F (486 aa).

The N-terminal stretch at Met1–Ala21 is a signal peptide. A non-LT domain region spans residues Leu22 to Val268. An LT domain region spans residues Gly269–Phe486. Glu313 is an active-site residue.

It in the N-terminal section; belongs to the bacterial solute-binding protein 3 family. The protein in the C-terminal section; belongs to the transglycosylase Slt family.

The protein resides in the cell outer membrane. It catalyses the reaction Exolytic cleavage of the (1-&gt;4)-beta-glycosidic linkage between N-acetylmuramic acid (MurNAc) and N-acetylglucosamine (GlcNAc) residues in peptidoglycan, from either the reducing or the non-reducing ends of the peptidoglycan chains, with concomitant formation of a 1,6-anhydrobond in the MurNAc residue.. Murein-degrading enzyme that degrades murein glycan strands and insoluble, high-molecular weight murein sacculi, with the concomitant formation of a 1,6-anhydromuramoyl product. Lytic transglycosylases (LTs) play an integral role in the metabolism of the peptidoglycan (PG) sacculus. Their lytic action creates space within the PG sacculus to allow for its expansion as well as for the insertion of various structures such as secretion systems and flagella. This is Membrane-bound lytic murein transglycosylase F from Serratia proteamaculans (strain 568).